Here is a 252-residue protein sequence, read N- to C-terminus: MNILLTNDDGIEAEGINTLAELLSKYHDVTMVAPENQRSASSHSITIYEPIIVKQVKKPYNIEAYSISGTPADCVRVALDKLVPDNIDMVISGINKGLNIGNDILYSGTVSAAIEGAMYKVPSMAVSAQFIKNKKENYKIAAKYALGMLNRLKKEDLKNDVVLNLNIPFCSEEEIKGIKVCKVGNKIFNTRFSEEIDEEGNKVLKLEGDINKDIYEGTDVYYIRNKYVTLTPLHYDLTNFNILEETEQLFLS.

Residues Asp-8, Asp-9, Ser-39, and Asn-95 each coordinate a divalent metal cation.

This sequence belongs to the SurE nucleotidase family. A divalent metal cation serves as cofactor.

It localises to the cytoplasm. It catalyses the reaction a ribonucleoside 5'-phosphate + H2O = a ribonucleoside + phosphate. Nucleotidase that shows phosphatase activity on nucleoside 5'-monophosphates. This chain is 5'-nucleotidase SurE, found in Clostridium botulinum (strain Kyoto / Type A2).